Consider the following 956-residue polypeptide: UvrABC system protein A (956 aa).

33 to 40 (GLSGSGKS) serves as a coordination point for ATP. A C4-type zinc finger spans residues 252–279 (CPYCGFSVGELEPRMFSFNSPFGACPTC). 2 consecutive ABC transporter domains span residues 309 to 587 (WRPI…KNSI) and 607 to 936 (GNGL…KYLK). 639–646 (GVSGSGKS) is an ATP binding site. A C4-type zinc finger spans residues 738–764 (CEACKGDGIIKIEMHFLPDVYVPCEVC).

This sequence belongs to the ABC transporter superfamily. UvrA family. As to quaternary structure, forms a heterotetramer with UvrB during the search for lesions.

It localises to the cytoplasm. Its function is as follows. The UvrABC repair system catalyzes the recognition and processing of DNA lesions. UvrA is an ATPase and a DNA-binding protein. A damage recognition complex composed of 2 UvrA and 2 UvrB subunits scans DNA for abnormalities. When the presence of a lesion has been verified by UvrB, the UvrA molecules dissociate. The polypeptide is UvrABC system protein A (Listeria monocytogenes serotype 4b (strain F2365)).